We begin with the raw amino-acid sequence, 385 residues long: Enoyl-[acyl-carrier-protein] reductase, mitochondrial (385 aa).

Tyr78 (proton donor) is an active-site residue. Residues Asn162, 190–193, 213–215, 288–291, 313–315, and Lys378 contribute to the NADP(+) site; these read TSGV, RDR, YGGM, and YWV.

Belongs to the zinc-containing alcohol dehydrogenase family. Quinone oxidoreductase subfamily. In terms of assembly, homodimer.

It is found in the mitochondrion matrix. It carries out the reaction a 2,3-saturated acyl-[ACP] + NADP(+) = a (2E)-enoyl-[ACP] + NADPH + H(+). Functionally, catalyzes the NADPH-dependent reduction of trans-2-enoyl thioesters in mitochondrial fatty acid synthesis (fatty acid synthesis type II). Fatty acid chain elongation in mitochondria uses acyl carrier protein (ACP) as an acyl group carrier, but the enzyme accepts both ACP and CoA thioesters as substrates in vitro. Required for respiration and the maintenance of the mitochondrial compartment. The sequence is that of Enoyl-[acyl-carrier-protein] reductase, mitochondrial (ETR1) from Candida glabrata (strain ATCC 2001 / BCRC 20586 / JCM 3761 / NBRC 0622 / NRRL Y-65 / CBS 138) (Yeast).